A 208-amino-acid chain; its full sequence is AN1-type zinc finger protein 6 (208 aa).

Residues 8–42 (SQVPMLCSTGCGFYGNPRTNGMCSVCYKEHLQRQN) form an A20-type zinc finger. 4 residues coordinate Zn(2+): cysteine 14, cysteine 18, cysteine 30, and cysteine 33. Residues 41 to 68 (QNSSNGRISPPATSVSSLSESLPVQCTD) show a composition bias toward polar residues. The interval 41 to 140 (QNSSNGRISP…PSEEQSKSLE (100 aa)) is disordered. Position 49 is a phosphoserine (serine 49). A compositionally biased stretch (low complexity) spans 75 to 94 (QSTLDSTSSSMQPSPVSNQS). Composition is skewed to polar residues over residues 95-110 (LLSE…STSV) and 120-133 (LQAS…QPSE). The AN1-type zinc finger occupies 143 to 189 (KQKKNRCFMCRKKVGLTGFECRCGNVYCGVHRYSDVHNCSYNYKADA). Zn(2+) contacts are provided by cysteine 149, cysteine 152, cysteine 163, cysteine 165, cysteine 170, histidine 173, histidine 179, and cysteine 181. Position 204 is an N6-acetyllysine (lysine 204).

Interacts with PKN1. Interacts with TRAF2. Interacts with mono- and polyubiquitin. Interacts with PEX6. Interacts with PEX5 (Cys-linked ubiquitinated).

The protein localises to the cytoplasm. In terms of biological role, involved in regulation of TNF-alpha induced NF-kappa-B activation and apoptosis. Involved in modulation of 'Lys-48'-linked polyubiquitination status of TRAF2 and decreases association of TRAF2 with RIPK1. Required for PTS1 target sequence-dependent protein import into peroxisomes and PEX5 stability; may cooperate with PEX6. In vitro involved in PEX5 export from the cytosol to peroxisomes. The sequence is that of AN1-type zinc finger protein 6 (ZFAND6) from Pongo abelii (Sumatran orangutan).